Here is a 139-residue protein sequence, read N- to C-terminus: D-ribose pyranase (139 aa).

Histidine 20 serves as the catalytic Proton donor. Residues aspartate 28, histidine 106, and 128-130 (YAN) each bind substrate.

This sequence belongs to the RbsD / FucU family. RbsD subfamily. Homodecamer.

It localises to the cytoplasm. The catalysed reaction is beta-D-ribopyranose = beta-D-ribofuranose. It functions in the pathway carbohydrate metabolism; D-ribose degradation; D-ribose 5-phosphate from beta-D-ribopyranose: step 1/2. Functionally, catalyzes the interconversion of beta-pyran and beta-furan forms of D-ribose. This Maridesulfovibrio salexigens (strain ATCC 14822 / DSM 2638 / NCIMB 8403 / VKM B-1763) (Desulfovibrio salexigens) protein is D-ribose pyranase.